The primary structure comprises 911 residues: MDTCGVGYVALGEAGPVGNMTVVDSPGQEVLNQLDVKTSSEMTSAEASIEMSLPTPLPGFEDSPDQRRLPPEQESLSRLEQQDLSSEMSKVSKPRASKPGRKRGGRTRKGPKRPQQPNPPSAPLVPGLLDQSNPLSTPMPKKRGRKSKAELLLLKLSKDLDRPESQSPKRPPEDFETPSGERPRRRAAQVALLYLQELAEELSTALPAPVSCPEGPKVSSPTKPKKIRQPAACPGGEEVDGAPRDEDFFLQVEAEDVEESEGPSESSSEPEPAVPRSTPRGSTSGKQKPHCRGMAPNGLPNHIMAPVWKCLHLTKDFREQKHSYWEFAEWIPLAWKWHLLSELEAAPYLPQEEKSPLFSVQREGLPEDGTLYRINRFSSITAHPERWDVSFFTGGPLWALDWCPVPEGAGASQYVALFSSPDMNETHPLSQLHSGPGLLQLWGLGTLQQESCPGNRAHFVYGIACDNGCIWDLKFCPSGAWELPGTPRKAPLLPRLGLLALACSDGKVLLFSLPHPEALLAQQPPDAVKPAIYKVQCVATLQVGSMQATDPSECGQCLSLAWMPTRPHQHLAAGYYNGMVVFWNLPTNSPLQRIRLSDGSLKLYPFQCFLAHDQAVRTLQWCKANSHFLASAGSDRKIKFWDLRRPYEPINSIKRFLSTELAWLLPYNGVTVAQDNCYASYGLCGIHYIDAGYLGFKAYFTAPRKGTVWSLSGSDWLGTIAAGDISGELIAAILPDMALNPINVKRPVERRFPIYKADLIPYQDSPEGPDHSSASSGVPNPPKARTYTETVNHHYLLFQDTDLGSFHDLLRREPMLRMQEGEGHSQLCLDRLQLEAIHKVRFSPNLDSYGWLVSGGQSGLVRIHFVRGLASPLGHRMQLESRAHFNAMFQPSSPTRRPGFSPTSHRLLPTP.

2 disordered regions span residues 34–187 (LDVK…RRRA) and 205–297 (ALPA…MAPN). A compositionally biased stretch (polar residues) spans 35–46 (DVKTSSEMTSAE). Phosphoserine is present on S63. Over residues 64 to 81 (PDQRRLPPEQESLSRLEQ) the composition is skewed to basic and acidic residues. The span at 92–112 (SKPRASKPGRKRGGRTRKGPK) shows a compositional bias: basic residues. Residues 114–123 (PQQPNPPSAP) are compositionally biased toward pro residues. Phosphoserine is present on residues S132, S165, S167, S220, and S260. Over residues 253–262 (EAEDVEESEG) the composition is skewed to acidic residues. The span at 263 to 275 (PSESSSEPEPAVP) shows a compositional bias: low complexity. 2 WD repeats span residues 465 to 521 (CDNG…ALLA) and 552 to 593 (SECG…PLQR). S597 carries the phosphoserine modification. The stretch at 611–651 (AHDQAVRTLQWCKANSHFLASAGSDRKIKFWDLRRPYEPIN) is one WD 3 repeat. A disordered region spans residues 765-785 (SPEGPDHSSASSGVPNPPKAR). The stretch at 832–874 (LQLEAIHKVRFSPNLDSYGWLVSGGQSGLVRIHFVRGLASPLG) is one WD 4 repeat. Phosphoserine occurs at positions 871, 892, and 893. The segment at 889-911 (FQPSSPTRRPGFSPTSHRLLPTP) is disordered. Residue T895 is modified to Phosphothreonine. Phosphoserine is present on S901.

In terms of assembly, part of the TFIIIC subcomplex TFIIIC2, consisting of six subunits, GTF3C1, GTF3C2, GTF3C3, GTF3C4, GTF3C5 and GTF3C6.

It localises to the nucleus. Its function is as follows. Required for RNA polymerase III-mediated transcription. Component of TFIIIC that initiates transcription complex assembly on tRNA and is required for transcription of 5S rRNA and other stable nuclear and cytoplasmic RNAs. May play a direct role in stabilizing interactions of TFIIIC2 with TFIIIC1. This is General transcription factor 3C polypeptide 2 (GTF3C2) from Pongo abelii (Sumatran orangutan).